A 161-amino-acid polypeptide reads, in one-letter code: E3 ubiquitin ligase complex SCF subunit sconC (161 aa).

The tract at residues 102–161 (ILAANYLDIKPLLDIGCKTVANMIKGKSPEEIRKTFNIQNDFTPEEEDQIRRENEWAEDR) is interaction with the F-box domain of F-box proteins.

The protein belongs to the SKP1 family. As to quaternary structure, component of the SCF (SKP1-CUL1-F-box protein) E3 ubiquitin ligase complexes.

It participates in protein modification; protein ubiquitination. Functionally, essential component of the SCF (SKP1-CUL1-F-box protein) E3 ubiquitin ligase complexes, which mediate the ubiquitination and subsequent proteasomal degradation of target proteins. Controls sulfur metabolite repression, probably by mediating the inactivation or degradation of the metR transcription factor. This Emericella nidulans (strain FGSC A4 / ATCC 38163 / CBS 112.46 / NRRL 194 / M139) (Aspergillus nidulans) protein is E3 ubiquitin ligase complex SCF subunit sconC (sconC).